The chain runs to 89 residues: UPF0297 protein MGAS9429_Spy1808 (89 aa).

Belongs to the UPF0297 family.

This chain is UPF0297 protein MGAS9429_Spy1808, found in Streptococcus pyogenes serotype M12 (strain MGAS9429).